Reading from the N-terminus, the 84-residue chain is U8-theraphotoxin-Hhn1b (84 aa).

A signal peptide spans 1–21 (MKVVLIVCLVWVMAMMELVSC). 4 disulfide bridges follow: Cys23–Cys35, Cys29–Cys44, Cys34–Cys67, and Cys54–Cys75.

This sequence belongs to the AVIT (prokineticin) family. As to expression, expressed by the venom gland.

It is found in the secreted. The polypeptide is U8-theraphotoxin-Hhn1b (Cyriopagopus hainanus (Chinese bird spider)).